The chain runs to 221 residues: SIN3-HDAC complex-associated factor (221 aa).

Disordered regions lie at residues K110–S153 and A201–W221. A compositionally biased stretch (basic and acidic residues) spans L111–D121. Positions S124 to P135 are enriched in low complexity. Residues C136–S153 are compositionally biased toward polar residues.

The protein belongs to the SINHCAF family. As to quaternary structure, component of the Sin3/HDAC corepressor complex at least composed of BRMS1, BRMS1L, ING2, SAP30, SAP30L, HDAC1. Found in a complex composed of at least SINHCAF, SIN3A, HDAC1, SAP30, RBBP4, OGT and TET1. Interacts with SIN3A and OGT. In terms of tissue distribution, embryonic stem cells (at protein level).

It localises to the nucleus. Functionally, subunit of the Sin3 deacetylase complex (Sin3/HDAC), this subunit is important for the repression of genes encoding components of the TGF-beta signaling pathway. Core component of a SIN3A complex (composed of at least SINHCAF, SIN3A, HDAC1, SAP30, RBBP4, OGT and TET1) present in embryonic stem (ES) cells. Promotes the stability of SIN3A and its presence on chromatin and is essential for maintaining the potential of ES cells to proliferate rapidly, while ensuring a short G1-phase of the cell cycle, thereby preventing premature lineage priming. The protein is SIN3-HDAC complex-associated factor (Sinhcaf) of Mus musculus (Mouse).